The following is a 1241-amino-acid chain: DNA-directed RNA polymerase subunit beta (1241 aa).

The tract at residues 1195 to 1219 is disordered; it reads PQDVQENVSGENVDAGYENEDVDID.

The protein belongs to the RNA polymerase beta chain family. In terms of assembly, the RNAP catalytic core consists of 2 alpha, 1 beta, 1 beta' and 1 omega subunit. When a sigma factor is associated with the core the holoenzyme is formed, which can initiate transcription.

It carries out the reaction RNA(n) + a ribonucleoside 5'-triphosphate = RNA(n+1) + diphosphate. In terms of biological role, DNA-dependent RNA polymerase catalyzes the transcription of DNA into RNA using the four ribonucleoside triphosphates as substrates. In Clostridium acetobutylicum (strain ATCC 824 / DSM 792 / JCM 1419 / IAM 19013 / LMG 5710 / NBRC 13948 / NRRL B-527 / VKM B-1787 / 2291 / W), this protein is DNA-directed RNA polymerase subunit beta.